Here is a 464-residue protein sequence, read N- to C-terminus: Chromosomal replication initiator protein DnaA (464 aa).

Residues 1–82 (MSLSLWQQCL…LLRFEVGSKP (82 aa)) form a domain I, interacts with DnaA modulators region. A domain II region spans residues 82–127 (PITQVISQTVTASVSSAPAAPAARTAAPSRPSWDNAAAQPELSYRS). Low complexity predominate over residues 98–113 (APAAPAARTAAPSRPS). Residues 98–117 (APAAPAARTAAPSRPSWDNA) form a disordered region. Positions 128–344 (NVNPKHTFDN…GALNRVIANA (217 aa)) are domain III, AAA+ region. ATP is bound by residues Gly-172, Gly-174, Lys-175, and Thr-176. The domain IV, binds dsDNA stretch occupies residues 345–464 (NFTGRAITID…FSNLIRTLSS (120 aa)).

This sequence belongs to the DnaA family. In terms of assembly, oligomerizes as a right-handed, spiral filament on DNA at oriC.

The protein localises to the cytoplasm. In terms of biological role, plays an important role in the initiation and regulation of chromosomal replication. Binds to the origin of replication; it binds specifically double-stranded DNA at a 9 bp consensus (dnaA box): 5'-TTATC[CA]A[CA]A-3'. DnaA binds to ATP and to acidic phospholipids. DnaA can inhibit its own gene expression as well as that of other genes. Plays an essential role in the initiation and regulation of chromosomal replication. ATP-DnaA binds to the origin of replication (oriC) to initiate formation of the DNA replication initiation complex once per cell cycle. Binds the DnaA box (a 9 base pair repeat at the origin) and separates the double-stranded (ds)DNA. Forms a right-handed helical filament on oriC DNA; dsDNA binds to the exterior of the filament while single-stranded (ss)DNA is stabiized in the filament's interior. The ATP-DnaA-oriC complex binds and stabilizes one strand of the AT-rich DNA unwinding element (DUE), permitting loading of DNA polymerase. After initiation quickly degrades to an ADP-DnaA complex that is not apt for DNA replication. Binds acidic phospholipids. The sequence is that of Chromosomal replication initiator protein DnaA from Serratia marcescens.